The sequence spans 149 residues: 4-hydroxyphenylacetate 3-monooxygenase, reductase component (149 aa).

Residue 27-34 coordinates FAD; that stretch reads ERGMTATA. Position 37 (Ser-37) interacts with NAD(+). FAD-binding positions include 48-50, 54-55, and His-80; these read AVS and KL. NAD(+)-binding positions include His-116 and 137-140; that span reads YFQR.

Belongs to the non-flavoprotein flavin reductase family. HpaC subfamily. In terms of assembly, homodimer. 4-HPA 3-monooxygenase consists of a reductase component HpaC and an oxygenase component HpaB.

The enzyme catalyses a reduced flavin + NAD(+) = an oxidized flavin + NADH + 2 H(+). It functions in the pathway aromatic compound metabolism; 4-hydroxyphenylacetate degradation; pyruvate and succinate semialdehyde from 4-hydroxyphenylacetate: step 1/7. Functionally, catalyzes the reduction of free flavins (FMN, FAD and riboflavin) by NADH. Subsequently, the reduced flavins diffuse to the large HpaB component. It utilizes NADH, but not NADPH as an electron donor, and both FAD and FMN as electron acceptors. The chain is 4-hydroxyphenylacetate 3-monooxygenase, reductase component from Thermus thermophilus (strain ATCC 27634 / DSM 579 / HB8).